The sequence spans 432 residues: MCFSPVLEINMQSESNVTVRDDIDDIDTNMYQPLSYPLSFQVSLTGFLMLEIVLGLGSNLTVLVLYCMKSNLINSVSNIITMNLHVLDVIICVGCIPLTIVILLLSLESNTALICCFHEACVSFASVSTAINVFAITLDRYDISVKPANRILTMGRAVMLMTSIWIFSFFSFLIPFIEVNFFSLQSGNTWANKTLLCVSTSEYYTELGMYYHLLVQIPIFFFTVIVMLITYTKILQALNIRIGTRFSTGQKKKARKKKTISLATHETTDMSQSSGGRNVVFGVRTSVSVIIALRRAVKRHRERRERQKRVFKMSLLIISTFLLCWTPISVLNTTILCLGPSDLLVKLRLCFLVMAYGTTIFHPLLYAFTRQKFQKVLKSKMKKRVVSIVEADPMPNNAVIHNSWIDPKRNKKVTYEDSEIREKCLVPQVVTD.

At 1-45 (MCFSPVLEINMQSESNVTVRDDIDDIDTNMYQPLSYPLSFQVSLT) the chain is on the extracellular side. A glycan (N-linked (GlcNAc...) asparagine) is linked at Asn16. Residues 46–66 (GFLMLEIVLGLGSNLTVLVLY) form a helical membrane-spanning segment. Residues 67–85 (CMKSNLINSVSNIITMNLH) are Cytoplasmic-facing. Residues 86–106 (VLDVIICVGCIPLTIVILLLS) form a helical membrane-spanning segment. Residues 107–115 (LESNTALIC) lie on the Extracellular side of the membrane. A helical membrane pass occupies residues 116-136 (CFHEACVSFASVSTAINVFAI). Residues 137-156 (TLDRYDISVKPANRILTMGR) are Cytoplasmic-facing. A helical membrane pass occupies residues 157–177 (AVMLMTSIWIFSFFSFLIPFI). Residues 178 to 208 (EVNFFSLQSGNTWANKTLLCVSTSEYYTELG) lie on the Extracellular side of the membrane. Asn192 carries an N-linked (GlcNAc...) asparagine glycan. A helical transmembrane segment spans residues 209 to 229 (MYYHLLVQIPIFFFTVIVMLI). Topologically, residues 230–314 (TYTKILQALN…ERQKRVFKMS (85 aa)) are cytoplasmic. Residues 315–335 (LLIISTFLLCWTPISVLNTTI) traverse the membrane as a helical segment. Residues 336 to 348 (LCLGPSDLLVKLR) are Extracellular-facing. Residues 349-369 (LCFLVMAYGTTIFHPLLYAFT) form a helical membrane-spanning segment. Over 370–432 (RQKFQKVLKS…KCLVPQVVTD (63 aa)) the chain is Cytoplasmic.

It belongs to the G-protein coupled receptor 1 family. As to expression, abundant levels detected in the brain and heart and no detectable expression in other peripheral tissues.

It is found in the cell membrane. In terms of biological role, orphan G-protein coupled receptor. Seems to act through a G(i)/G(o) mediated pathway. May be involved in ciliogenesis. The protein is G-protein coupled receptor 22 (Gpr22) of Mus musculus (Mouse).